Reading from the N-terminus, the 66-residue chain is Small ribosomal subunit protein bS21 (66 aa).

It belongs to the bacterial ribosomal protein bS21 family.

The sequence is that of Small ribosomal subunit protein bS21 from Maridesulfovibrio salexigens (strain ATCC 14822 / DSM 2638 / NCIMB 8403 / VKM B-1763) (Desulfovibrio salexigens).